We begin with the raw amino-acid sequence, 801 residues long: Ferredoxin:CoB-CoM heterodisulfide reductase subunit A (801 aa).

Residue 149–172 participates in FAD binding; it reads GGGIAGITAALNLADNGVSTVLVE. 4Fe-4S ferredoxin-type domains are found at residues 239–269 and 285–320; these read KKPR…FNCG and PKIY…FSQK. [4Fe-4S] cluster-binding residues include C248, C251, C254, C258, C295, C303, C306, and C310. The segment at 382-409 is disordered; sequence FSKASSDPTPATCDSRCEDSSDESQGTD. 4Fe-4S ferredoxin-type domains are found at residues 606–634 and 635–664; these read EIAT…VNES and GRVV…IAGF. The [4Fe-4S] cluster site is built by C615, C618, C621, C624, C644, C647, C650, and C654.

It belongs to the HdrA family. The ferredoxin:CoB-CoM heterodisulfide reductase is composed of three subunits; HdrA1, HdrB1 and HdrC1. Requires [4Fe-4S] cluster as cofactor. FAD serves as cofactor.

It localises to the cytoplasm. The catalysed reaction is coenzyme B + coenzyme M + 2 oxidized [2Fe-2S]-[ferredoxin] = coenzyme M-coenzyme B heterodisulfide + 2 reduced [2Fe-2S]-[ferredoxin] + 2 H(+). It functions in the pathway cofactor metabolism; coenzyme M-coenzyme B heterodisulfide reduction; coenzyme B and coenzyme M from coenzyme M-coenzyme B heterodisulfide: step 1/1. Its function is as follows. Part of a complex that catalyzes the reversible reduction of CoM-S-S-CoB to the thiol-coenzymes H-S-CoM (coenzyme M) and H-S-CoB (coenzyme B). Probably involved in methylotrophic methanogenesis but not in aceticlastic methanogenesis. The polypeptide is Ferredoxin:CoB-CoM heterodisulfide reductase subunit A (Methanosarcina acetivorans (strain ATCC 35395 / DSM 2834 / JCM 12185 / C2A)).